The primary structure comprises 245 residues: rRNA adenine N-6-methyltransferase (245 aa).

6 residues coordinate S-adenosyl-L-methionine: N10, L12, G37, E58, D83, and S100.

Belongs to the class I-like SAM-binding methyltransferase superfamily. rRNA adenine N(6)-methyltransferase family.

The catalysed reaction is adenosine(2085) in 23S rRNA + 2 S-adenosyl-L-methionine = N(6)-dimethyladenosine(2085) in 23S rRNA + 2 S-adenosyl-L-homocysteine + 2 H(+). In terms of biological role, this protein produces a dimethylation of the adenine residue at position 2085 in 23S rRNA, resulting in reduced affinity between ribosomes and macrolide-lincosamide-streptogramin B antibiotics. This Clostridium perfringens protein is rRNA adenine N-6-methyltransferase (ermBP).